The primary structure comprises 253 residues: TCF3 fusion partner (253 aa).

Disordered stretches follow at residues Ser-49 to Arg-72 and Asp-142 to Ala-211. Ser-167 bears the Phosphoserine mark. Pro residues predominate over residues Arg-170 to Pro-181. The residue at position 172 (Thr-172) is a Phosphothreonine. Phosphoserine occurs at positions 180 and 188. Position 207 is a phosphothreonine (Thr-207). Lys-216 is covalently cross-linked (Glycyl lysine isopeptide (Lys-Gly) (interchain with G-Cter in SUMO2)). The disordered stretch occupies residues Val-234–Asp-253. Phosphoserine occurs at positions 249 and 252.

Interacts with NOL3; translocates NOL3 into the nucleus and negatively regulated TFPT-induced cell death. Component of the chromatin remodeling INO80 complex; specifically part of a complex module associated with the N-terminus of INO80.

It localises to the nucleus. In terms of biological role, appears to promote apoptosis in a p53/TP53-independent manner. Its function is as follows. Putative regulatory component of the chromatin remodeling INO80 complex which is involved in transcriptional regulation, DNA replication and probably DNA repair. This Homo sapiens (Human) protein is TCF3 fusion partner (TFPT).